A 239-amino-acid polypeptide reads, in one-letter code: MHEQRRGIVRVDRFLELHRRLLVGVLVAILGGLGLSAGCLLVMTRLRARASAEVTRIAREWDVLRKPDNTVSASGHEVEGRGGSSIRAKEDALLARLESCASSPWRDGFAYAYAQACVADIFFARKEWEKAQQAYVRAAYGARRSYVAGVYYFNAASCADERGRFEEARELYQRSARVQDFPLVPRALFNVGRMEEALGRAAAATAAYMQLYERFPLNGWAALGKSRAIAISVGGGRAQ.

Residues 21–43 (LLVGVLVAILGGLGLSAGCLLVM) form a helical membrane-spanning segment. TPR repeat units follow at residues 112–145 (AYAQACVADIFFARKEWEKAQQAYVRAAYGARRS) and 149–182 (GVYYFNAASCADERGRFEEARELYQRSARVQDFP).

The protein resides in the cell membrane. In Treponema pallidum (strain Nichols), this protein is TPR repeat-containing protein TP_0282.